A 284-amino-acid polypeptide reads, in one-letter code: Homeobox protein SMOX-5 (284 aa).

A DNA-binding region (homeobox) is located at residues 37–96 (RRKTRTTFSNCQLNELENNFNRQRYLTPTDRDRIAKHLGLTNTQVITWFQNRRAKLKREA). Positions 117–172 (LSLSDHDHEETQIDDENEQGDNNNDDDGDDNDVEEDDGEEQEKNHTKYLTQPPSIS) are disordered. Acidic residues predominate over residues 128–156 (QIDDENEQGDNNNDDDGDDNDVEEDDGEE).

It is found in the nucleus. In Schistosoma mansoni (Blood fluke), this protein is Homeobox protein SMOX-5 (SMOX-5).